The following is a 176-amino-acid chain: Skp1-related protein (176 aa).

Belongs to the SKP1 family. Probable component of the SCF(sel-10) E3 ubiquitin-protein ligase complex containing F-box domain-containing protein sel-10 as the substrate recognition component. Interacts with cul-1. May interact with the F-box protein mec-15. Interacts with dre-1. Interacts with syg-1. Interacts with sel-10. Ubiquitously expressed in the adult.

Its function is as follows. Probable essential component of SCF (SKP1-CUL1-F-box protein) E3 ubiquitin-protein ligase complexes, which mediate the ubiquitination and subsequent proteasomal degradation of target proteins. Regulates cell proliferation during embryonic and larval development. Involved in synapse elimination in early synapse development. May negatively regulate the apoptotic activity of cep-1 in response to genotoxic stress. Plays a role in sex determination. In Caenorhabditis elegans, this protein is Skp1-related protein.